Here is a 452-residue protein sequence, read N- to C-terminus: MPLPIVAIIGRPNVGKSTLANRLAGDQHAIVHDEPGITRDRTYRPGFWQDRDFQIVDTGGLVFDDDTEFLPLIREQSLAALNEASAAIFVVDGQTGPTTGDLEIADWLRQQPVPVLLAVNKCESPELGLIQATQFWELGLGNPYPISGIHGNGTGELLDDLITYLPPPEEITQSDEIKVAIIGRPNVGKSSLLNALLGENRAIVSPISGTTRDAIDTVIQHNEQTYRLIDTAGIRRKKNVEYGAEFFSINRAFKAIRRCDVVLFVIDAIDGVTDQDLKLADRIIEEGRSVVLVINKWDAVDKDSYTIYEYKTNIFSRLYFMEWAPIIFVSAMTGQRVNKILELVNSSTEEHRRRVTTAVINEVLQEAVTWHSPPTTRQGKQGKIYYGTQVSTQPPTIALFVNDPKRFNENYRRYIESQFRKQLGFPGTPIRLLWRGKKVREVEQSANRATKV.

EngA-type G domains follow at residues 4-169 and 177-352; these read PIVA…PPPE and IKVA…EEHR. Residues 10–17, 57–61, 120–123, 183–190, 230–234, and 295–298 each bind GTP; these read GRPNVGKS, DTGGL, NKCE, DTAGI, and NKWD. The KH-like domain occupies 353-438; that stretch reads RRVTTAVINE…PIRLLWRGKK (86 aa).

The protein belongs to the TRAFAC class TrmE-Era-EngA-EngB-Septin-like GTPase superfamily. EngA (Der) GTPase family. As to quaternary structure, associates with the 50S ribosomal subunit.

Functionally, GTPase that plays an essential role in the late steps of ribosome biogenesis. The sequence is that of GTPase Der from Rippkaea orientalis (strain PCC 8801 / RF-1) (Cyanothece sp. (strain PCC 8801)).